We begin with the raw amino-acid sequence, 80 residues long: Acyl carrier protein (80 aa).

Residues 4 to 79 (DEVKGQVYDI…DAINYIVEKK (76 aa)) form the Carrier domain. Serine 39 bears the O-(pantetheine 4'-phosphoryl)serine mark.

The protein belongs to the acyl carrier protein (ACP) family. In terms of processing, 4'-phosphopantetheine is transferred from CoA to a specific serine of apo-ACP by AcpS. This modification is essential for activity because fatty acids are bound in thioester linkage to the sulfhydryl of the prosthetic group.

The protein resides in the cytoplasm. It functions in the pathway lipid metabolism; fatty acid biosynthesis. In terms of biological role, carrier of the growing fatty acid chain in fatty acid biosynthesis. This chain is Acyl carrier protein, found in Chloroherpeton thalassium (strain ATCC 35110 / GB-78).